The sequence spans 68 residues: Alpha-conotoxin-like Mr1.2 (68 aa).

An N-terminal signal peptide occupies residues 1–21 (MGMRMMFTVFLLVVLATTVVS). Positions 22-48 (FTSDRGSDGRNAAAKDKASDLVALTVK) are excised as a propeptide. Intrachain disulfides connect Cys50-Cys56 and Cys51-Cys64. A ser-Xaa-Pro motif, crucial for potent interaction with nAChR region spans residues 52–54 (SNP). Asn65 carries the post-translational modification Asparagine amide.

The protein belongs to the conotoxin A superfamily. In terms of tissue distribution, expressed by the venom duct.

The protein localises to the secreted. Its function is as follows. Alpha-conotoxins act on postsynaptic membranes, they bind to the nicotinic acetylcholine receptors (nAChR) and thus inhibit them. The chain is Alpha-conotoxin-like Mr1.2 from Conus marmoreus (Marble cone).